The following is a 112-amino-acid chain: Cell cycle protein GpsB (112 aa).

The stretch at 42 to 77 forms a coiled coil; it reads YQKMADMNNEVVKLSEENHKLKKELEELRLRVATSR. Positions 74 to 96 are disordered; it reads ATSRPQDNKNFSSNNSSSASNNV. The span at 81–95 shows a compositional bias: low complexity; the sequence is NKNFSSNNSSSASNN.

Belongs to the GpsB family. In terms of assembly, forms polymers through the coiled coil domains. Interacts with PBP1, MreC and EzrA.

It is found in the cytoplasm. Its function is as follows. Divisome component that associates with the complex late in its assembly, after the Z-ring is formed, and is dependent on DivIC and PBP2B for its recruitment to the divisome. Together with EzrA, is a key component of the system that regulates PBP1 localization during cell cycle progression. Its main role could be the removal of PBP1 from the cell pole after pole maturation is completed. Also contributes to the recruitment of PBP1 to the division complex. Not essential for septum formation. The chain is Cell cycle protein GpsB from Staphylococcus epidermidis (strain ATCC 12228 / FDA PCI 1200).